A 299-amino-acid chain; its full sequence is GTPase Era (299 aa).

Residues 4 to 171 (KSGFVAILGR…VDILSENLDE (168 aa)) enclose the Era-type G domain. The G1 stretch occupies residues 12-19 (GRPNVGKS). GTP is bound at residue 12 to 19 (GRPNVGKS). Positions 38–42 (QTTRN) are G2. The interval 59-62 (DTPG) is G3. GTP contacts are provided by residues 59-63 (DTPGI) and 121-124 (NKID). Residues 121–124 (NKID) are G4. The segment at 150-152 (ISA) is G5. The KH type-2 domain maps to 202–280 (TREEIPHSVA…FLETWVKVKK (79 aa)).

This sequence belongs to the TRAFAC class TrmE-Era-EngA-EngB-Septin-like GTPase superfamily. Era GTPase family. Monomer.

Its subcellular location is the cytoplasm. It is found in the cell membrane. Functionally, an essential GTPase that binds both GDP and GTP, with rapid nucleotide exchange. Plays a role in 16S rRNA processing and 30S ribosomal subunit biogenesis and possibly also in cell cycle regulation and energy metabolism. The protein is GTPase Era of Streptococcus pneumoniae (strain P1031).